The sequence spans 214 residues: MAGGRNGVKFVEMDIRSREAYELAEEWFDDVVFSYEIPPGVLDKERLKEIKKEYGNVAITLINPKPSLVKEAVQRFKQNYLIYVESSDLRVVRYSIERGVDAVISPWANRKDQGIDHVLARMMNKRGVALGFSLRPLLHQNPYERANALKFMRKAWTLVNKYKVPRFISSSAKGKFQVRGVKELISLGIAIGMEEVQAKASLSFYPLGILERLK.

The protein belongs to the eukaryotic/archaeal RNase P protein component 3 family. In terms of assembly, consists of a catalytic RNA component and at least 4-5 protein subunits. Forms a subcomplex with Rnp2 which stimulates the catalytic RNA.

It is found in the cytoplasm. It carries out the reaction Endonucleolytic cleavage of RNA, removing 5'-extranucleotides from tRNA precursor.. In terms of biological role, part of ribonuclease P, a protein complex that generates mature tRNA molecules by cleaving their 5'-ends. The RNA is catalytic, but its KM for pre-tRNA is 170-fold decreased in the presence of the 4 known protein subunits (Rnp1-4). The protein subunits also decrease the amount of Mg(2+) needed for activity. In Pyrococcus furiosus (strain ATCC 43587 / DSM 3638 / JCM 8422 / Vc1), this protein is Ribonuclease P protein component 3.